Here is a 358-residue protein sequence, read N- to C-terminus: MPQNVLLPGPAPWGFRLTGGIDFNQPLVISRITPGSKSSVANLCPGDVILAIDGFSTETMTHAEAQDRIKAATDQLCLKIDRAETRIWSPQVCEDGKAQPFKINLEAEPQDLGFFEHKHNIRPKPFILPGRSSGSSTPSGFDPGSGRSTPSSVSTIDPVELKAASRIAPNVPLEMELPGVKIVHAQFNTPMQLYSDDNIMESLQGQVSTILGEKTPMSDPVPPSVPQSDVYKLLHDDTEHPSKPRQSGSFKILQDMVDDDPDRPSGTRSVRAPVTKPNTGAAAVQKVPICDRCGNGIVGTVVKAKDKLRHPDCFVCSDCNLNLKQKGYFFVEGQLYCEAHARARMRPPEGYDAVTVYH.

The 84-residue stretch at 1–84 folds into the PDZ domain; sequence MPQNVLLPGP…QLCLKIDRAE (84 aa). 2 disordered regions span residues 126–155 and 237–274; these read FILP…SVST and DTEH…RAPV. Low complexity predominate over residues 129–146; it reads PGRSSGSSTPSGFDPGSG. Positions 288 to 347 constitute an LIM zinc-binding domain; the sequence is PICDRCGNGIVGTVVKAKDKLRHPDCFVCSDCNLNLKQKGYFFVEGQLYCEAHARARMRP.

It localises to the cytoplasm. Its subcellular location is the myofibril. The protein localises to the sarcomere. The protein resides in the z line. May play a role in the organization of actin filament arrays within muscle cells. This chain is PDZ and LIM domain protein 3 (pdlim3), found in Xenopus laevis (African clawed frog).